The chain runs to 615 residues: AP-1-like transcription factor yap1 (615 aa).

The span at 27-50 (SSNNPTQKQQTVTHNSEANQNLNH) shows a compositional bias: polar residues. Disordered stretches follow at residues 27-84 (SSNN…EDSP) and 99-180 (NESL…RKEK). Positions 35–42 (QQTVTHNS) match the Bipartite nuclear localization signal motif. Residues 52–67 (PGHASSGSFSVSPPSG) show a composition bias toward low complexity. A Bipartite nuclear localization signal motif is present at residues 68–75 (LDGSVNQS). Positions 118–147 (PGDKRKDIDGQVNDKEDSGKKRRESDEKAA) are enriched in basic and acidic residues. One can recognise a bZIP domain in the interval 157 to 220 (SEPTSKRKAQ…ERLQLELKEY (64 aa)). The segment at 162 to 183 (KRKAQNRAAQRAFRERKEKHLK) is basic motif. A leucine-zipper region spans residues 185 to 192 (LEAKVEEL). Positions 214–364 (QLELKEYRKR…RGYQVNSSYS (151 aa)) are transcription activation 1. Over residues 270 to 294 (LFTNTQTSKSNQNKAKDNPTATPRS) the composition is skewed to polar residues. A disordered region spans residues 270 to 416 (LFTNTQTSKS…AVKATESSTP (147 aa)). The segment at 289–301 (TATPRSEAQVPGV) is n-CRD. The span at 310 to 321 (SSPNGLSNGPSP) shows a compositional bias: low complexity. Composition is skewed to polar residues over residues 322–344 (AKST…SGTL) and 358–369 (QVNSSYSASTKQ). Positions 372–394 (HDTPSSDSPSSSSDSHQSQLLSS) are enriched in low complexity. Residues 409-508 (KATESSTPHA…SQDFGTFFDD (100 aa)) form a transcription activation 2 region. Cystine bridges form between C562/C586, C562/C595, and C586/C595. The interval 562–595 (CNKIWDRLQSMEKFRNGEIDVDNLCSELRTKARC) is c-CRD. The Nuclear export signal signature appears at 580-587 (IDVDNLCS).

It belongs to the bZIP family. YAP subfamily. Post-translationally, depending on the oxidative stress inducing agent, yap1 can undergo two distinct conformational changes, both involving disulfide bond formation, and both masking the nuclear export signal, thus abolishing nuclear export.

The protein resides in the nucleus. The protein localises to the cytoplasm. Transcription activator involved in oxidative stress response and redox homeostasis. Regulates the transcription of genes encoding antioxidant enzymes and components of the cellular thiol-reducing pathways, including thioredoxin peroxidase (aspF3), cytochrome peroxidase, and the protein AFUA_3G00730, which appears to belong to the glutathione S-transferase family. Proteins of the protein degradation pathway are also regulated by yap1, as well the p-nitroreductase family protein AFUA_5G09910. May be involved in antifungal resistance to voriconazole. This Aspergillus fumigatus (strain ATCC MYA-4609 / CBS 101355 / FGSC A1100 / Af293) (Neosartorya fumigata) protein is AP-1-like transcription factor yap1.